A 101-amino-acid chain; its full sequence is Large ribosomal subunit protein uL24 (101 aa).

The protein belongs to the universal ribosomal protein uL24 family. As to quaternary structure, part of the 50S ribosomal subunit.

Its function is as follows. One of two assembly initiator proteins, it binds directly to the 5'-end of the 23S rRNA, where it nucleates assembly of the 50S subunit. One of the proteins that surrounds the polypeptide exit tunnel on the outside of the subunit. The sequence is that of Large ribosomal subunit protein uL24 from Streptococcus equi subsp. zooepidemicus (strain H70).